The chain runs to 234 residues: S-adenosylmethionine synthase 1 (234 aa).

ATP contacts are provided by residues 10 to 12, 78 to 81, aspartate 89, 95 to 96, alanine 112, lysine 116, and lysine 120; these read DGK, SGRF, and RK. Aspartate 89 provides a ligand contact to L-methionine. Position 120 (lysine 120) interacts with L-methionine.

Belongs to the AdoMet synthase family. As to quaternary structure, homotetramer. Mn(2+) is required as a cofactor. Mg(2+) serves as cofactor. It depends on Co(2+) as a cofactor. The cofactor is K(+). In terms of tissue distribution, mainly in floral buds and roots.

It localises to the cytoplasm. The enzyme catalyses L-methionine + ATP + H2O = S-adenosyl-L-methionine + phosphate + diphosphate. The protein operates within amino-acid biosynthesis; S-adenosyl-L-methionine biosynthesis; S-adenosyl-L-methionine from L-methionine: step 1/1. Its function is as follows. Catalyzes the formation of S-adenosylmethionine from methionine and ATP. The reaction comprises two steps that are both catalyzed by the same enzyme: formation of S-adenosylmethionine (AdoMet) and triphosphate, and subsequent hydrolysis of the triphosphate. The polypeptide is S-adenosylmethionine synthase 1 (SMS-1) (Petroselinum crispum (Parsley)).